Here is a 228-residue protein sequence, read N- to C-terminus: Octanoyltransferase (228 aa).

The 186-residue stretch at 40–225 folds into the BPL/LPL catalytic domain; sequence GEEAERVWLV…SFERVFDAAP (186 aa). Residues 79–86, 156–158, and 169–171 each bind substrate; these read RGGQWTYH, AIG, and GIA. The active-site Acyl-thioester intermediate is Cys-187.

It belongs to the LipB family.

It is found in the cytoplasm. It carries out the reaction octanoyl-[ACP] + L-lysyl-[protein] = N(6)-octanoyl-L-lysyl-[protein] + holo-[ACP] + H(+). Its pathway is protein modification; protein lipoylation via endogenous pathway; protein N(6)-(lipoyl)lysine from octanoyl-[acyl-carrier-protein]: step 1/2. Functionally, catalyzes the transfer of endogenously produced octanoic acid from octanoyl-acyl-carrier-protein onto the lipoyl domains of lipoate-dependent enzymes. Lipoyl-ACP can also act as a substrate although octanoyl-ACP is likely to be the physiological substrate. The protein is Octanoyltransferase of Acidiphilium cryptum (strain JF-5).